The sequence spans 181 residues: RNA pyrophosphohydrolase (181 aa).

The Nudix hydrolase domain occupies glycine 6–glutamine 149. The short motif at glycine 38–glycine 59 is the Nudix box element. Residues glycine 159–alanine 181 are disordered. A compositionally biased stretch (basic residues) spans arginine 168 to alanine 181.

This sequence belongs to the Nudix hydrolase family. RppH subfamily. A divalent metal cation serves as cofactor.

Its function is as follows. Accelerates the degradation of transcripts by removing pyrophosphate from the 5'-end of triphosphorylated RNA, leading to a more labile monophosphorylated state that can stimulate subsequent ribonuclease cleavage. This chain is RNA pyrophosphohydrolase, found in Alkalilimnicola ehrlichii (strain ATCC BAA-1101 / DSM 17681 / MLHE-1).